We begin with the raw amino-acid sequence, 110 residues long: Coiled-coil-helix-coiled-coil-helix domain-containing protein 5 (110 aa).

Methionine 1 is modified (N-acetylmethionine). CHCH domains are found at residues 9 to 52 (ARYC…PIIR) and 55 to 97 (RQAC…QPPR). Short sequence motifs (cx9C motif) lie at residues 12-22 (CGRELEQYGQC), 34-44 (CHYLKMSIAQC), 58-68 (CAQPFEAFEEC), and 79-89 (CAEHMRRFLQC). 4 disulfide bridges follow: cysteine 12/cysteine 44, cysteine 22/cysteine 34, cysteine 58/cysteine 89, and cysteine 68/cysteine 79.

As to quaternary structure, monomer.

It localises to the mitochondrion intermembrane space. The polypeptide is Coiled-coil-helix-coiled-coil-helix domain-containing protein 5 (CHCHD5) (Homo sapiens (Human)).